Consider the following 72-residue polypeptide: Translation initiation factor IF-1 (72 aa).

Residues 1 to 72 enclose the S1-like domain; that stretch reads MAKQSAIEKD…SKGRIAFRYK (72 aa).

The protein belongs to the IF-1 family. Component of the 30S ribosomal translation pre-initiation complex which assembles on the 30S ribosome in the order IF-2 and IF-3, IF-1 and N-formylmethionyl-tRNA(fMet); mRNA recruitment can occur at any time during PIC assembly.

The protein resides in the cytoplasm. Functionally, one of the essential components for the initiation of protein synthesis. Stabilizes the binding of IF-2 and IF-3 on the 30S subunit to which N-formylmethionyl-tRNA(fMet) subsequently binds. Helps modulate mRNA selection, yielding the 30S pre-initiation complex (PIC). Upon addition of the 50S ribosomal subunit IF-1, IF-2 and IF-3 are released leaving the mature 70S translation initiation complex. In Parabacteroides distasonis (strain ATCC 8503 / DSM 20701 / CIP 104284 / JCM 5825 / NCTC 11152), this protein is Translation initiation factor IF-1.